Here is a 348-residue protein sequence, read N- to C-terminus: Sesquiterpene synthase MGU_11447 (348 aa).

Residues Asp-91 and Asp-96 each contribute to the Mg(2+) site. A DDXXXD motif motif is present at residues 91-96 (DDLFVD). Arg-184 lines the substrate pocket. Mg(2+) contacts are provided by Asn-230, Ser-234, and Glu-238.

This sequence belongs to the terpene synthase family. It depends on Mg(2+) as a cofactor.

It carries out the reaction (2E,6E)-farnesyl diphosphate + H2O = (+)-corvol ether B + diphosphate. It catalyses the reaction (2E,6E)-farnesyl diphosphate + H2O = (+)-corvol ether A + diphosphate. Functionally, terpene synthase that catalyzes the conversion of (2E,6E)-farnesyl diphosphate (FPP) into sesquiterpenes which are important for fungi-environment interactions. Produces a mixture consisting of 8 sesquiterpenes including corvol ethers A and B, as well as traces of epizonarene, gamma-cadinene, delta-cadinene, alpha-cadinene, alpha-cadinol, and an unidentified sesquiterpene. Produces both corvol ether A and corvol ether B in similar concentrations. The protein is Sesquiterpene synthase MGU_11447 of Metarhizium guizhouense (strain ARSEF 977).